The sequence spans 258 residues: 4-hydroxy-tetrahydrodipicolinate reductase (258 aa).

NAD(+) contacts are provided by residues 8–13 (GVTGRM), 93–95 (GTT), and 117–120 (AANF). Histidine 149 acts as the Proton donor/acceptor in catalysis. Histidine 150 is a binding site for (S)-2,3,4,5-tetrahydrodipicolinate. The active-site Proton donor is the lysine 153. A (S)-2,3,4,5-tetrahydrodipicolinate-binding site is contributed by 159–160 (GT).

It belongs to the DapB family.

It is found in the cytoplasm. The catalysed reaction is (S)-2,3,4,5-tetrahydrodipicolinate + NAD(+) + H2O = (2S,4S)-4-hydroxy-2,3,4,5-tetrahydrodipicolinate + NADH + H(+). The enzyme catalyses (S)-2,3,4,5-tetrahydrodipicolinate + NADP(+) + H2O = (2S,4S)-4-hydroxy-2,3,4,5-tetrahydrodipicolinate + NADPH + H(+). The protein operates within amino-acid biosynthesis; L-lysine biosynthesis via DAP pathway; (S)-tetrahydrodipicolinate from L-aspartate: step 4/4. Functionally, catalyzes the conversion of 4-hydroxy-tetrahydrodipicolinate (HTPA) to tetrahydrodipicolinate. The sequence is that of 4-hydroxy-tetrahydrodipicolinate reductase from Thermomicrobium roseum (strain ATCC 27502 / DSM 5159 / P-2).